The primary structure comprises 465 residues: MPHHHSLPTSSADFGDFNSAPASSIQTSSLSQDDLLGSYDETIRHSPSVKSHPSPDPRASNLDLLFLDHNAEEHRRPEPTYSPRSRPTGVLPESVPHARSPRRLSTFSSSTSPTSPPSITDAGCDIIFHPFYDHMDVNATRAMQKMQGHGERGASKRSDKMQLRGQASHSRIAPSSSPPHSRLLDTLATTTKLASKWRSVIAHPTSPNTADQTHNGQPKPQIRHAETSPMDITHDTPFASAEQIAGSYIPPTGAPGFTQASVLGMKHHGDGPFEPLTLIGRKDSTSNVLTPEDAIGLKACLPPRQRLTNQWTLLFSLDQHGASLSTLYRLIDIYSVSHQSSGNILVIRDGHGNRFGTYMNEPIVKREGTYYGSGESFLFKLTHSCQTIPYRWTGKNKYFALCEAGFMSFGGGAGAYGLILDSTFTHNSSATCPAYNNDILCELEPLKSQHAQSFQCLGLEVWSTL.

Disordered stretches follow at residues 1–61 (MPHH…RASN), 73–119 (EHRR…PPSI), 144–183 (QKMQ…HSRL), and 203–223 (HPTS…PQIR). The segment covering 20-32 (APASSIQTSSLSQ) has biased composition (polar residues). Over residues 103–113 (RLSTFSSSTSP) the composition is skewed to low complexity. The segment covering 148–162 (GHGERGASKRSDKMQ) has biased composition (basic and acidic residues). 2 stretches are compositionally biased toward polar residues: residues 165–179 (GQAS…SSPP) and 205–218 (TSPN…NGQP). The TLDc domain maps to 287–465 (NVLTPEDAIG…CLGLEVWSTL (179 aa)).

It belongs to the OXR1 family.

It localises to the mitochondrion. Its function is as follows. May be involved in protection from oxidative damage. The chain is Oxidation resistance protein 1 (OXR1) from Cryptococcus neoformans var. neoformans serotype D (strain B-3501A) (Filobasidiella neoformans).